A 555-amino-acid polypeptide reads, in one-letter code: Dihydroxy-acid dehydratase (555 aa).

Asp80 serves as a coordination point for Mg(2+). Cys121 contributes to the [2Fe-2S] cluster binding site. Positions 122 and 123 each coordinate Mg(2+). Lys123 carries the N6-carboxylysine modification. Cys193 contacts [2Fe-2S] cluster. Glu444 is a binding site for Mg(2+). Catalysis depends on Ser470, which acts as the Proton acceptor.

The protein belongs to the IlvD/Edd family. In terms of assembly, homodimer. It depends on [2Fe-2S] cluster as a cofactor. Requires Mg(2+) as cofactor.

The enzyme catalyses (2R)-2,3-dihydroxy-3-methylbutanoate = 3-methyl-2-oxobutanoate + H2O. The catalysed reaction is (2R,3R)-2,3-dihydroxy-3-methylpentanoate = (S)-3-methyl-2-oxopentanoate + H2O. Its pathway is amino-acid biosynthesis; L-isoleucine biosynthesis; L-isoleucine from 2-oxobutanoate: step 3/4. The protein operates within amino-acid biosynthesis; L-valine biosynthesis; L-valine from pyruvate: step 3/4. Functions in the biosynthesis of branched-chain amino acids. Catalyzes the dehydration of (2R,3R)-2,3-dihydroxy-3-methylpentanoate (2,3-dihydroxy-3-methylvalerate) into 2-oxo-3-methylpentanoate (2-oxo-3-methylvalerate) and of (2R)-2,3-dihydroxy-3-methylbutanoate (2,3-dihydroxyisovalerate) into 2-oxo-3-methylbutanoate (2-oxoisovalerate), the penultimate precursor to L-isoleucine and L-valine, respectively. The polypeptide is Dihydroxy-acid dehydratase (Aquifex aeolicus (strain VF5)).